The chain runs to 820 residues: Serine/threonine-protein phosphatase 4 regulatory subunit 3 (820 aa).

The 100-residue stretch at 1-100 (MSDTRRRVKV…DEIWEKICQV (100 aa)) folds into the WH1 domain. Disordered regions lie at residues 687-711 (EDEE…DFPE) and 750-820 (AANG…RLGS). Over residues 701 to 711 (EKTKTEDDFPE) the composition is skewed to basic and acidic residues. Polar residues predominate over residues 750 to 761 (AANGANSTNSKS). Residues 770–784 (SSNGSSSKNTSLTTT) show a composition bias toward low complexity. Residues 798 to 809 (YPDDEDEEEEED) are compositionally biased toward acidic residues.

The protein belongs to the SMEK family. In terms of assembly, serine/threonine-protein phosphatase 4 (PP4) occurs in different assemblies of the catalytic and one or more regulatory subunits.

Regulatory subunit of serine/threonine-protein phosphatase 4 (PP4). This is Serine/threonine-protein phosphatase 4 regulatory subunit 3 from Xenopus tropicalis (Western clawed frog).